Consider the following 130-residue polypeptide: Small ribosomal subunit protein uS9 (130 aa).

The protein belongs to the universal ribosomal protein uS9 family.

This is Small ribosomal subunit protein uS9 from Pseudomonas entomophila (strain L48).